Here is a 432-residue protein sequence, read N- to C-terminus: Glutamyl-tRNA reductase (432 aa).

Residues 50 to 53 (TCNR), Ser110, 115 to 117 (ETQ), and Gln121 contribute to the substrate site. Cys51 serves as the catalytic Nucleophile. 190 to 195 (GAGEMS) is a binding site for NADP(+).

This sequence belongs to the glutamyl-tRNA reductase family. Homodimer.

The catalysed reaction is (S)-4-amino-5-oxopentanoate + tRNA(Glu) + NADP(+) = L-glutamyl-tRNA(Glu) + NADPH + H(+). The protein operates within porphyrin-containing compound metabolism; protoporphyrin-IX biosynthesis; 5-aminolevulinate from L-glutamyl-tRNA(Glu): step 1/2. Its function is as follows. Catalyzes the NADPH-dependent reduction of glutamyl-tRNA(Glu) to glutamate 1-semialdehyde (GSA). This is Glutamyl-tRNA reductase from Aliarcobacter butzleri (strain RM4018) (Arcobacter butzleri).